A 508-amino-acid polypeptide reads, in one-letter code: Photosystem II CP47 reaction center protein (508 aa).

The next 6 membrane-spanning stretches (helical) occupy residues 21–36 (AVHIMHTALVSGWAGS), 101–115 (IVFSGLCFLAAIWHW), 140–156 (GIHLFLAGVACFGFGAF), 203–218 (IAAGTLGILAGLFHLS), 237–252 (VLSSSIAAVFFAAFVV), and 457–472 (TFALLFFFGHIWHGAR).

It belongs to the PsbB/PsbC family. PsbB subfamily. In terms of assembly, PSII is composed of 1 copy each of membrane proteins PsbA, PsbB, PsbC, PsbD, PsbE, PsbF, PsbH, PsbI, PsbJ, PsbK, PsbL, PsbM, PsbT, PsbX, PsbY, PsbZ, Psb30/Ycf12, at least 3 peripheral proteins of the oxygen-evolving complex and a large number of cofactors. It forms dimeric complexes. It depends on Binds multiple chlorophylls. PSII binds additional chlorophylls, carotenoids and specific lipids. as a cofactor.

It localises to the plastid. The protein localises to the chloroplast thylakoid membrane. In terms of biological role, one of the components of the core complex of photosystem II (PSII). It binds chlorophyll and helps catalyze the primary light-induced photochemical processes of PSII. PSII is a light-driven water:plastoquinone oxidoreductase, using light energy to abstract electrons from H(2)O, generating O(2) and a proton gradient subsequently used for ATP formation. The chain is Photosystem II CP47 reaction center protein from Secale cereale (Rye).